Reading from the N-terminus, the 207-residue chain is Metalloproteinase inhibitor 1 (207 aa).

The first 23 residues, 1–23 (MAPLAALASSMLLLLWLVAPSRA), serve as a signal peptide directing secretion. Zn(2+) is bound at residue Cys-24. Residues 24 to 27 (CTCV) form an involved in metalloproteinase-binding region. 6 cysteine pairs are disulfide-bonded: Cys-24-Cys-93, Cys-26-Cys-122, Cys-36-Cys-147, Cys-150-Cys-197, Cys-155-Cys-160, and Cys-168-Cys-189. The NTR domain maps to 24-147 (CTCVPPHPQT…GFTKTYAAGC (124 aa)). N-linked (GlcNAc...) asparagine glycosylation occurs at Asn-53. Residues 90-91 (ES) form an involved in metalloproteinase-binding region. Asn-101 is a glycosylation site (N-linked (GlcNAc...) asparagine). At Ser-178 the chain carries Phosphoserine.

This sequence belongs to the protease inhibitor I35 (TIMP) family. As to quaternary structure, interacts with MMP1, MMP3, MMP10 and MMP13, but has only very low affinity for MMP14. Interacts with CD63; identified in a complex with CD63 and ITGB1. The activity of TIMP1 is dependent on the presence of disulfide bonds. In terms of processing, N-glycosylated.

It localises to the secreted. Functionally, metalloproteinase inhibitor that functions by forming one to one complexes with target metalloproteinases, such as collagenases, and irreversibly inactivates them by binding to their catalytic zinc cofactor. Acts on MMP1, MMP2, MMP3, MMP7, MMP8, MMP9, MMP10, MMP11, MMP12, MMP13 and MMP16. Does not act on MMP14. Also functions as a growth factor that regulates cell differentiation, migration and cell death and activates cellular signaling cascades via CD63 and ITGB1. Plays a role in integrin signaling. In Oryctolagus cuniculus (Rabbit), this protein is Metalloproteinase inhibitor 1 (TIMP1).